The following is a 727-amino-acid chain: NADH-ubiquinone oxidoreductase 75 kDa subunit, mitochondrial (727 aa).

A mitochondrion-targeting transit peptide spans 1-23; that stretch reads MLRIPVRKALVGLSKSSKGCVRT. One can recognise a 2Fe-2S ferredoxin-type domain in the interval 30 to 108; the sequence is NLIEVFVDGQ…GWNILTNSEK (79 aa). 3 residues coordinate [2Fe-2S] cluster: C64, C75, and C78. K84 carries the post-translational modification N6-acetyllysine. C92 lines the [2Fe-2S] cluster pocket. Positions 108–147 constitute a 4Fe-4S His(Cys)3-ligated-type domain; it reads KTKKAREGVMEFLLANHPLDCPICDQGGECDLQDQSMMFG. Positions 124, 128, 131, 137, 176, 179, 182, and 226 each coordinate [4Fe-4S] cluster. A 4Fe-4S Mo/W bis-MGD-type domain is found at 245–301; it reads TRKTESIDVMDAVGSNIVVSTRTGEVMRILPRMHEDINEEWISDKTRFAYDGLKRQR. 2 positions are modified to N6-acetyllysine: K499 and K709.

The protein belongs to the complex I 75 kDa subunit family. In terms of assembly, core subunit of respiratory chain NADH dehydrogenase (Complex I) which is composed of 45 different subunits. This is the largest subunit of complex I and it is a component of the iron-sulfur (IP) fragment of the enzyme. Complex I associates with ubiquinol-cytochrome reductase complex (Complex III) to form supercomplexes. Interacts with MDM2 and AKAP1. [2Fe-2S] cluster is required as a cofactor. It depends on [4Fe-4S] cluster as a cofactor.

The protein resides in the mitochondrion inner membrane. The catalysed reaction is a ubiquinone + NADH + 5 H(+)(in) = a ubiquinol + NAD(+) + 4 H(+)(out). Functionally, core subunit of the mitochondrial membrane respiratory chain NADH dehydrogenase (Complex I) which catalyzes electron transfer from NADH through the respiratory chain, using ubiquinone as an electron acceptor. Essential for catalysing the entry and efficient transfer of electrons within complex I. Plays a key role in the assembly and stability of complex I and participates in the association of complex I with ubiquinol-cytochrome reductase complex (Complex III) to form supercomplexes. The chain is NADH-ubiquinone oxidoreductase 75 kDa subunit, mitochondrial (NDUFS1) from Bos taurus (Bovine).